A 359-amino-acid polypeptide reads, in one-letter code: Type-1 angiotensin II receptor (359 aa).

Over 1–25 the chain is Extracellular; sequence MILNSSTEDSIKRIQDDCPKAGRHN. N-linked (GlcNAc...) asparagine glycosylation occurs at asparagine 4. Glutamine 15 and aspartate 17 together coordinate angiotensin II. 2 cysteine pairs are disulfide-bonded: cysteine 18–cysteine 274 and cysteine 101–cysteine 180. The chain crosses the membrane as a helical span at residues 26–55; that stretch reads YIFVMIPTLYSIIFVVGIFGNSLVVIVIYF. Over 56–61 the chain is Cytoplasmic; sequence YMKLKT. Residues 62–89 traverse the membrane as a helical segment; it reads VASVFLLNLALADLCFLLTLPLWAVYTA. Residues 90-98 are Extracellular-facing; that stretch reads MEYRWPFGN. A helical membrane pass occupies residues 99–125; sequence YLCKIASASVSFNLYASVFLLTCLSID. Topologically, residues 126-141 are cytoplasmic; sequence RYLAIVHPMKSRLRRT. A helical transmembrane segment spans residues 142–165; it reads MLVAKVTCIIIWLLAGLASLPTII. The Extracellular segment spans residues 166–190; the sequence is HRNVFFIENTNITVCAFHYESQNST. Arginine 167 serves as a coordination point for angiotensin II. Asparagine 176 carries N-linked (GlcNAc...) asparagine glycosylation. The angiotensin II site is built by phenylalanine 182, histidine 183, and tyrosine 184. A glycan (N-linked (GlcNAc...) asparagine) is linked at asparagine 188. A helical transmembrane segment spans residues 191–216; that stretch reads LPVGLGLTKNILGFLFPFLIILTSYT. Lysine 199 contributes to the angiotensin II binding site. Topologically, residues 217 to 239 are cytoplasmic; sequence LIWKALKKAYEIQKNKPRNDDIF. A helical membrane pass occupies residues 240-268; sequence KIIMAIVLFFFFSWVPHQIFTFLDVLIQL. At 269 to 278 the chain is on the extracellular side; sequence GIIHDCKIAD. Residues 279–304 traverse the membrane as a helical segment; sequence IVDTAMPITICLAYFNNCLNPLFYGF. At 305-359 the chain is on the cytoplasmic side; that stretch reads LGKKFKKYFLQLLKYIPPKAKSHSSLSTKMSTLSYRPSENGSSSTKKSAPCTEVE. Positions 326–359 are disordered; it reads SHSSLSTKMSTLSYRPSENGSSSTKKSAPCTEVE. Positions 327 to 351 are enriched in polar residues; it reads HSSLSTKMSTLSYRPSENGSSSTKK. The S-palmitoyl cysteine moiety is linked to residue cysteine 355.

This sequence belongs to the G-protein coupled receptor 1 family. Interacts with MAS1. Interacts with ARRB1. Interacts with FLNA (via filamin repeat 21); increases PKA-mediated phosphorylation of FLNA. In terms of processing, C-terminal Ser or Thr residues may be phosphorylated.

It is found in the cell membrane. Its function is as follows. Receptor for angiotensin II, a vasoconstricting peptide, which acts as a key regulator of blood pressure and sodium retention by the kidney. The activated receptor in turn couples to G-alpha proteins G(q) (GNAQ, GNA11, GNA14 or GNA15) and thus activates phospholipase C and increases the cytosolic Ca(2+) concentrations, which in turn triggers cellular responses such as stimulation of protein kinase C. This is Type-1 angiotensin II receptor (AGTR1) from Sus scrofa (Pig).